The following is a 1062-amino-acid chain: Carbamoyl phosphate synthase large chain (1062 aa).

A carboxyphosphate synthetic domain region spans residues 1-401 (MPKRKDIHKI…AMQKAVRSLE (401 aa)). Residues Arg-129, Arg-169, Gly-175, Gly-176, Lys-208, Ile-210, Glu-215, Gly-241, Ile-242, His-243, Gln-284, and Glu-298 each contribute to the ATP site. An ATP-grasp 1 domain is found at 133–327 (KNLCKELGEP…IAKMAAKIAV (195 aa)). The Mg(2+) site is built by Gln-284, Glu-298, and Asn-300. Residues Gln-284, Glu-298, and Asn-300 each contribute to the Mn(2+) site. Residues 402 to 546 (IDEKDLYSEE…YSTYDAENES (145 aa)) form an oligomerization domain region. Residues 547–929 (HRSGKKSVIV…ALYKAFAGAK (383 aa)) form a carbamoyl phosphate synthetic domain region. One can recognise an ATP-grasp 2 domain in the interval 671 to 861 (DDIIKELKLN…MAQVATRVIM (191 aa)). ATP-binding residues include Arg-707, Asp-746, Leu-748, Glu-752, Gly-777, Val-778, His-779, Ser-780, Gln-820, and Glu-832. Residues Gln-820, Glu-832, and Asn-834 each coordinate Mg(2+). Residues Gln-820, Glu-832, and Asn-834 each coordinate Mn(2+). In terms of domain architecture, MGS-like spans 930–1062 (MQLPENGNVL…NRSFATDALQ (133 aa)). The allosteric domain stretch occupies residues 930–1062 (MQLPENGNVL…NRSFATDALQ (133 aa)).

Belongs to the CarB family. As to quaternary structure, composed of two chains; the small (or glutamine) chain promotes the hydrolysis of glutamine to ammonia, which is used by the large (or ammonia) chain to synthesize carbamoyl phosphate. Tetramer of heterodimers (alpha,beta)4. Mg(2+) serves as cofactor. It depends on Mn(2+) as a cofactor.

The enzyme catalyses hydrogencarbonate + L-glutamine + 2 ATP + H2O = carbamoyl phosphate + L-glutamate + 2 ADP + phosphate + 2 H(+). It catalyses the reaction hydrogencarbonate + NH4(+) + 2 ATP = carbamoyl phosphate + 2 ADP + phosphate + 2 H(+). Its pathway is amino-acid biosynthesis; L-arginine biosynthesis; carbamoyl phosphate from bicarbonate: step 1/1. It functions in the pathway pyrimidine metabolism; UMP biosynthesis via de novo pathway; (S)-dihydroorotate from bicarbonate: step 1/3. In terms of biological role, large subunit of the glutamine-dependent carbamoyl phosphate synthetase (CPSase). CPSase catalyzes the formation of carbamoyl phosphate from the ammonia moiety of glutamine, carbonate, and phosphate donated by ATP, constituting the first step of 2 biosynthetic pathways, one leading to arginine and/or urea and the other to pyrimidine nucleotides. The large subunit (synthetase) binds the substrates ammonia (free or transferred from glutamine from the small subunit), hydrogencarbonate and ATP and carries out an ATP-coupled ligase reaction, activating hydrogencarbonate by forming carboxy phosphate which reacts with ammonia to form carbamoyl phosphate. The polypeptide is Carbamoyl phosphate synthase large chain (Lactobacillus acidophilus (strain ATCC 700396 / NCK56 / N2 / NCFM)).